An 861-amino-acid chain; its full sequence is Linoleate 9S-lipoxygenase 2 (861 aa).

One can recognise a PLAT domain in the interval Asn-29–Val-160. The 699-residue stretch at Pro-163–Ile-861 folds into the Lipoxygenase domain. The interval Glu-212–Ser-246 is disordered. Fe cation-binding residues include His-522, His-527, His-713, Asn-717, and Ile-861.

The protein belongs to the lipoxygenase family. As to quaternary structure, monomer. The cofactor is Fe cation. In terms of tissue distribution, highly expressed in tubers and roots. Detected in flower buds and leaves.

The protein resides in the cytoplasm. It carries out the reaction (9Z,12Z)-octadecadienoate + O2 = (9S)-hydroperoxy-(10E,12Z)-octadecadienoate. The protein operates within lipid metabolism; oxylipin biosynthesis. In terms of biological role, plant lipoxygenases may be involved in a number of diverse aspects of plant physiology including growth and development, pest resistance, and senescence or responses to wounding. Catalyzes the hydroperoxidation of lipids containing a cis,cis-1,4-pentadiene structure. Linoleic acid is the preferred substrate, but is also active with linolenic and arachidonic acids. This chain is Linoleate 9S-lipoxygenase 2 (LOX1.2), found in Solanum tuberosum (Potato).